Consider the following 721-residue polypeptide: Leucine-rich repeat flightless-interacting protein 2 (721 aa).

Residues 1–370 (MGTPASGRKR…YMQGLKELKE (370 aa)) are DVL3-binding. A Phosphoserine modification is found at Ser-18. Residues 22 to 49 (EALSNIAREAEARLAAKRAARAEARDIR) adopt a coiled-coil conformation. A phosphoserine mark is found at Gly-96, Leu-101, Tyr-168, Ser-173, Ser-190, and Ser-202. Disordered regions lie at residues 232 to 262 (SARS…ESVV) and 295 to 338 (KSDK…IDPD). Composition is skewed to polar residues over residues 237-251 (PGFT…VSSD) and 305-338 (TRPS…IDPD). Phosphoserine occurs at positions 309, 312, 320, 324, and 328. A Phosphothreonine modification is found at Thr-331. Residues Ser-332 and Ser-333 each carry the phosphoserine modification. 2 coiled-coil regions span residues 349-524 (DLKD…GEKH) and 566-714 (LDVR…KANR).

This sequence belongs to the LRRFIP family. In terms of assembly, interacts (via N-terminus) with DVL3. Interacts with FLII. Weakly interacts with MYD88 in resting cells. Following LPS-stimulation, the interaction with MYD88 is rapidly enhanced; the complex gradually dissociates to basal levels after 6 hours of stimulation. Interaction with MYD88 is regulated by LPS-induced phosphorylation at Ser-202. In the presence of LPS, competes with FLII for MYD88-binding. In terms of processing, ser-190 and Ser-202 are phosphorylated in response to LPS stimulation. Ser-202 phosphorylation regulates the LPS-induced interaction with MYD88. Widely expressed, with highest levels in heart and skeletal muscle.

Its function is as follows. May function as activator of the canonical Wnt signaling pathway, in association with DVL3, upstream of CTNNB1/beta-catenin. Positively regulates Toll-like receptor (TLR) signaling in response to agonist probably by competing with the negative FLII regulator for MYD88-binding. In Homo sapiens (Human), this protein is Leucine-rich repeat flightless-interacting protein 2 (LRRFIP2).